The chain runs to 215 residues: Dual specificity phosphatase 29 (215 aa).

A Tyrosine-protein phosphatase domain is found at histidine 53–lysine 201. Histidine 145–arginine 152 provides a ligand contact to substrate. The Phosphocysteine intermediate role is filled by cysteine 146.

The protein belongs to the protein-tyrosine phosphatase family. Non-receptor class dual specificity subfamily. Homodimer. Interacts with PRKAA2. Skeletal muscle, liver and adipose tissue.

It localises to the cytoplasm. It is found in the nucleus. It carries out the reaction O-phospho-L-tyrosyl-[protein] + H2O = L-tyrosyl-[protein] + phosphate. The catalysed reaction is O-phospho-L-seryl-[protein] + H2O = L-seryl-[protein] + phosphate. The enzyme catalyses O-phospho-L-threonyl-[protein] + H2O = L-threonyl-[protein] + phosphate. Functionally, dual specificity phosphatase able to dephosphorylate phosphotyrosine, phosphoserine and phosphothreonine residues within the same substrate, with a preference for phosphotyrosine as a substrate. Involved in the modulation of intracellular signaling cascades. In skeletal muscle regulates systemic glucose homeostasis by activating, AMPK, an energy sensor protein kinase. Affects MAP kinase signaling though modulation of the MAPK1/2 cascade in skeletal muscle promoting muscle cell differentiation, development and atrophy. The sequence is that of Dual specificity phosphatase 29 from Mus musculus (Mouse).